The following is a 979-amino-acid chain: UPF0182 protein MT0070 (979 aa).

7 helical membrane-spanning segments follow: residues 19–41, 63–85, 114–136, 174–196, 208–230, 261–280, and 285–307; these read LVTAGMGMLALLLFGPRLVDIYV, LAIVAAVALVVAGIVLAALLLAY, LFGWGIAVTLGVVCGLIASFDWV, WLFVAVVLAFLASLLTHYLFGGL, AARVQLAVFAGAVVLLKAVAYWL, LVLVAIAVLCAVSFFTAIFL, and IPAMAAALLVLSAILVGGLWPLL. The interval 894–948 is disordered; the sequence is VFGPGTGRVATXPGGDAASAPPPGAGGPAPPQGVPPPRTTQPPAAPPRGPDVPPA. Pro residues predominate over residues 913 to 946; sequence APPPGAGGPAPPQGVPPPRTTQPPAAPPRGPDVP.

This sequence belongs to the UPF0182 family.

It is found in the cell membrane. The polypeptide is UPF0182 protein MT0070 (Mycobacterium tuberculosis (strain CDC 1551 / Oshkosh)).